A 227-amino-acid chain; its full sequence is KH domain-containing protein MJ0443 (227 aa).

KH domains lie at 14–77 and 106–163; these read KSIE…RDIV and DYAS…KEAV.

This Methanocaldococcus jannaschii (strain ATCC 43067 / DSM 2661 / JAL-1 / JCM 10045 / NBRC 100440) (Methanococcus jannaschii) protein is KH domain-containing protein MJ0443.